The chain runs to 116 residues: Ribosome-binding factor A (116 aa).

It belongs to the RbfA family. In terms of assembly, monomer. Binds 30S ribosomal subunits, but not 50S ribosomal subunits or 70S ribosomes.

Its subcellular location is the cytoplasm. In terms of biological role, one of several proteins that assist in the late maturation steps of the functional core of the 30S ribosomal subunit. Associates with free 30S ribosomal subunits (but not with 30S subunits that are part of 70S ribosomes or polysomes). Required for efficient processing of 16S rRNA. May interact with the 5'-terminal helix region of 16S rRNA. The protein is Ribosome-binding factor A of Streptococcus sanguinis (strain SK36).